A 633-amino-acid polypeptide reads, in one-letter code: Threonine--tRNA ligase (633 aa).

A TGS domain is found at 1 to 59; sequence MIRITFSAEQKVKEYSGKVTGFDILQPDVLKEAIAFKVNGELHDLSREIEADAEIEVIQ. The tract at residues 240–532 is catalytic; that stretch reads DHRKIAKDMD…LIENYAGKFP (293 aa). Residues Cys332, His383, and His509 each coordinate Zn(2+).

The protein belongs to the class-II aminoacyl-tRNA synthetase family. In terms of assembly, homodimer. It depends on Zn(2+) as a cofactor.

It localises to the cytoplasm. It catalyses the reaction tRNA(Thr) + L-threonine + ATP = L-threonyl-tRNA(Thr) + AMP + diphosphate + H(+). Its function is as follows. Catalyzes the attachment of threonine to tRNA(Thr) in a two-step reaction: L-threonine is first activated by ATP to form Thr-AMP and then transferred to the acceptor end of tRNA(Thr). Also edits incorrectly charged L-seryl-tRNA(Thr). The protein is Threonine--tRNA ligase of Wolbachia sp. subsp. Drosophila simulans (strain wRi).